A 474-amino-acid chain; its full sequence is Protein nucleotidyltransferase YdiU (474 aa).

Residues Gly-89, Gly-91, Arg-92, Lys-112, Asp-124, Gly-125, Arg-175, and Arg-182 each coordinate ATP. Asp-256 functions as the Proton acceptor in the catalytic mechanism. The Mg(2+) site is built by Asn-257 and Asp-266. Asp-266 provides a ligand contact to ATP.

This sequence belongs to the SELO family. Mg(2+) is required as a cofactor. Mn(2+) serves as cofactor.

The catalysed reaction is L-seryl-[protein] + ATP = 3-O-(5'-adenylyl)-L-seryl-[protein] + diphosphate. The enzyme catalyses L-threonyl-[protein] + ATP = 3-O-(5'-adenylyl)-L-threonyl-[protein] + diphosphate. It catalyses the reaction L-tyrosyl-[protein] + ATP = O-(5'-adenylyl)-L-tyrosyl-[protein] + diphosphate. It carries out the reaction L-histidyl-[protein] + UTP = N(tele)-(5'-uridylyl)-L-histidyl-[protein] + diphosphate. The catalysed reaction is L-seryl-[protein] + UTP = O-(5'-uridylyl)-L-seryl-[protein] + diphosphate. The enzyme catalyses L-tyrosyl-[protein] + UTP = O-(5'-uridylyl)-L-tyrosyl-[protein] + diphosphate. In terms of biological role, nucleotidyltransferase involved in the post-translational modification of proteins. It can catalyze the addition of adenosine monophosphate (AMP) or uridine monophosphate (UMP) to a protein, resulting in modifications known as AMPylation and UMPylation. This chain is Protein nucleotidyltransferase YdiU, found in Corynebacterium glutamicum (strain ATCC 13032 / DSM 20300 / JCM 1318 / BCRC 11384 / CCUG 27702 / LMG 3730 / NBRC 12168 / NCIMB 10025 / NRRL B-2784 / 534).